The following is a 139-amino-acid chain: 6,7-dimethyl-8-ribityllumazine synthase (139 aa).

5-amino-6-(D-ribitylamino)uracil is bound by residues Phe-11, 42 to 44 (ALE), and 66 to 68 (VVI). 71-72 (ET) provides a ligand contact to (2S)-2-hydroxy-3-oxobutyl phosphate. His-74 (proton donor) is an active-site residue. Asn-98 lines the 5-amino-6-(D-ribitylamino)uracil pocket. A (2S)-2-hydroxy-3-oxobutyl phosphate-binding site is contributed by Arg-112.

The protein belongs to the DMRL synthase family.

It catalyses the reaction (2S)-2-hydroxy-3-oxobutyl phosphate + 5-amino-6-(D-ribitylamino)uracil = 6,7-dimethyl-8-(1-D-ribityl)lumazine + phosphate + 2 H2O + H(+). It participates in cofactor biosynthesis; riboflavin biosynthesis; riboflavin from 2-hydroxy-3-oxobutyl phosphate and 5-amino-6-(D-ribitylamino)uracil: step 1/2. Functionally, catalyzes the formation of 6,7-dimethyl-8-ribityllumazine by condensation of 5-amino-6-(D-ribitylamino)uracil with 3,4-dihydroxy-2-butanone 4-phosphate. This is the penultimate step in the biosynthesis of riboflavin. In Novosphingobium aromaticivorans (strain ATCC 700278 / DSM 12444 / CCUG 56034 / CIP 105152 / NBRC 16084 / F199), this protein is 6,7-dimethyl-8-ribityllumazine synthase.